We begin with the raw amino-acid sequence, 306 residues long: uncharacterized protein (306 aa).

This is an uncharacterized protein from Haemophilus influenzae (strain ATCC 51907 / DSM 11121 / KW20 / Rd).